A 94-amino-acid polypeptide reads, in one-letter code: Co-chaperonin GroES (94 aa).

It belongs to the GroES chaperonin family. In terms of assembly, heptamer of 7 subunits arranged in a ring. Interacts with the chaperonin GroEL.

It localises to the cytoplasm. In terms of biological role, together with the chaperonin GroEL, plays an essential role in assisting protein folding. The GroEL-GroES system forms a nano-cage that allows encapsulation of the non-native substrate proteins and provides a physical environment optimized to promote and accelerate protein folding. GroES binds to the apical surface of the GroEL ring, thereby capping the opening of the GroEL channel. The sequence is that of Co-chaperonin GroES from Ligilactobacillus salivarius (strain UCC118) (Lactobacillus salivarius).